We begin with the raw amino-acid sequence, 362 residues long: Phosphoserine aminotransferase (362 aa).

L-glutamate is bound by residues Ser9 and Arg42. Pyridoxal 5'-phosphate contacts are provided by residues 76-77, Trp102, Thr153, Asp174, and Gln197; that span reads GR. Residue Lys198 is modified to N6-(pyridoxal phosphate)lysine. 239-240 lines the pyridoxal 5'-phosphate pocket; that stretch reads NT.

Belongs to the class-V pyridoxal-phosphate-dependent aminotransferase family. SerC subfamily. Homodimer. It depends on pyridoxal 5'-phosphate as a cofactor.

It is found in the cytoplasm. The enzyme catalyses O-phospho-L-serine + 2-oxoglutarate = 3-phosphooxypyruvate + L-glutamate. It carries out the reaction 4-(phosphooxy)-L-threonine + 2-oxoglutarate = (R)-3-hydroxy-2-oxo-4-phosphooxybutanoate + L-glutamate. It participates in amino-acid biosynthesis; L-serine biosynthesis; L-serine from 3-phospho-D-glycerate: step 2/3. The protein operates within cofactor biosynthesis; pyridoxine 5'-phosphate biosynthesis; pyridoxine 5'-phosphate from D-erythrose 4-phosphate: step 3/5. Functionally, catalyzes the reversible conversion of 3-phosphohydroxypyruvate to phosphoserine and of 3-hydroxy-2-oxo-4-phosphonooxybutanoate to phosphohydroxythreonine. The polypeptide is Phosphoserine aminotransferase (Salmonella arizonae (strain ATCC BAA-731 / CDC346-86 / RSK2980)).